The sequence spans 269 residues: 3-methyl-2-oxobutanoate hydroxymethyltransferase (269 aa).

2 residues coordinate Mg(2+): Asp-48 and Asp-87. 3-methyl-2-oxobutanoate-binding positions include 48-49 (DS), Asp-87, and Lys-116. Glu-118 contacts Mg(2+). Glu-185 functions as the Proton acceptor in the catalytic mechanism.

This sequence belongs to the PanB family. As to quaternary structure, homodecamer; pentamer of dimers. Mg(2+) serves as cofactor.

It localises to the cytoplasm. It carries out the reaction 3-methyl-2-oxobutanoate + (6R)-5,10-methylene-5,6,7,8-tetrahydrofolate + H2O = 2-dehydropantoate + (6S)-5,6,7,8-tetrahydrofolate. It functions in the pathway cofactor biosynthesis; (R)-pantothenate biosynthesis; (R)-pantoate from 3-methyl-2-oxobutanoate: step 1/2. Catalyzes the reversible reaction in which hydroxymethyl group from 5,10-methylenetetrahydrofolate is transferred onto alpha-ketoisovalerate to form ketopantoate. This is 3-methyl-2-oxobutanoate hydroxymethyltransferase from Campylobacter curvus (strain 525.92).